Reading from the N-terminus, the 76-residue chain is Envelope small membrane protein (76 aa).

Topologically, residues 1 to 14 (MLQLVNDNGLVVNV) are virion surface. The helical transmembrane segment at 15–35 (ILWLFVLFFLLIISITFVQLV) threads the bilayer. At 36–76 (NLCFTCHRLCNSAVYTPIGRLYRVYKSYMRIDPLPSTVIDV) the chain is on the intravirion side.

The protein belongs to the alphacoronaviruses E protein family. As to quaternary structure, homopentamer. Interacts with membrane protein M in the budding compartment of the host cell, which is located between endoplasmic reticulum and the Golgi complex. Interacts with Nucleoprotein. Interacts with host IRF3; this interaction inhibits type I IFN production.

The protein resides in the host Golgi apparatus membrane. It localises to the host endoplasmic reticulum. Functionally, plays a central role in virus morphogenesis and assembly. Acts as a viroporin and self-assembles in host membranes forming pentameric protein-lipid pores that allow ion transport. Also plays a role in the induction of apoptosis. Counteracts the production of type I interferon by interacting with host IRF3 component and preventing its translocation to the host nucleus. The protein is Envelope small membrane protein of Sus scrofa (Pig).